The primary structure comprises 352 residues: Protein Wnt-3a (352 aa).

The signal sequence occupies residues 1–18 (MAPLGYFLLLCSLKQALG). Intrachain disulfides connect cysteine 77/cysteine 88, cysteine 128/cysteine 136, cysteine 138/cysteine 155, cysteine 203/cysteine 217, cysteine 205/cysteine 212, cysteine 281/cysteine 312, cysteine 297/cysteine 307, cysteine 311/cysteine 351, cysteine 327/cysteine 342, cysteine 329/cysteine 339, and cysteine 334/cysteine 335. A glycan (N-linked (GlcNAc...) asparagine) is linked at asparagine 87. A lipid anchor (O-palmitoleoyl serine; by PORCN) is attached at serine 209. Asparagine 298 carries an N-linked (GlcNAc...) asparagine glycan.

The protein belongs to the Wnt family. In terms of assembly, forms a soluble 1:1 complex with AFM; this prevents oligomerization and is required for prolonged biological activity. The complex with AFM may represent the physiological form in body fluids. Homooligomer; disulfide-linked, leading to inactivation. Interacts with PORCN. Interacts with APCDD1 and WLS. Component of the Wnt-Fzd-LRP5-LRP6 signaling complex that contains a WNT protein, a FZD protein and LRP5 or LRP6. Interacts directly in the complex with LRP6. Interacts with glypican GPC3. Interacts with PKD1 (via extracellular domain). Interacts with FZD5. In terms of processing, palmitoleoylation by PORCN is required for efficient binding to frizzled receptors. Palmitoleoylation is required for proper trafficking to cell surface, vacuolar acidification is critical to release palmitoleoylated WNT3A from WLS in secretory vesicles. Depalmitoleoylated by NOTUM, leading to inhibit Wnt signaling pathway, possibly by promoting disulfide bond formation and oligomerization. Proteolytic processing by TIKI1 and TIKI2 promotes oxidation and formation of large disulfide-bond oligomers, leading to inactivation of WNT3A. Post-translationally, disulfide bonds have critical and distinct roles in secretion and activity. Loss of each conserved cysteine in WNT3A results in high molecular weight oxidized Wnt oligomers, which are formed through inter-Wnt disulfide bonding. As to expression, moderately expressed in placenta and at low levels in adult lung, spleen, and prostate.

It is found in the secreted. The protein resides in the extracellular space. The protein localises to the extracellular matrix. Ligand for members of the frizzled family of seven transmembrane receptors. Functions in the canonical Wnt signaling pathway that results in activation of transcription factors of the TCF/LEF family. Required for normal embryonic mesoderm development and formation of caudal somites. Required for normal morphogenesis of the developing neural tube. Mediates self-renewal of the stem cells at the bottom on intestinal crypts (in vitro). The polypeptide is Protein Wnt-3a (WNT3A) (Homo sapiens (Human)).